We begin with the raw amino-acid sequence, 1598 residues long: Structural maintenance of chromosomes flexible hinge domain-containing protein GMI1 (1598 aa).

The interval 1191-1218 (VTSAPTSEREESGYSTPHSKTTPPPESG) is disordered. 2 coiled-coil regions span residues 1258–1301 (TEDL…ASLE) and 1565–1595 (EEMMTEENRSLRRLVKKLKKANEKYQNFTAM).

In terms of tissue distribution, highly expressed in closed buds and open flowers. Expressed at low levels in roots, stems, cauline leaves and siliques. Expressed in the region of the shoot and floral meristems.

It localises to the nucleus. Functionally, contributes to DNA double-strand break (DSB) repair via somatic homologous recombination. Functions downstream of ATM. The chain is Structural maintenance of chromosomes flexible hinge domain-containing protein GMI1 from Arabidopsis thaliana (Mouse-ear cress).